Here is a 223-residue protein sequence, read N- to C-terminus: MSQTKTLKVRVALLCILVGIVLALVAVVTDHWAVLSPHVEHHNSTCEAAHFGLWRICTKRIFVGDKERSCGPITLPGEKNCSYFRHFNPGESSEIFEVTTQKEYSISAAAIAIFSLGFIIVGTLCALLSFRKKRDYLLRPASMFYIFAGLCLSVSAEVMRQSVQRMVDSEHTAWIAHSLAWSFICACVAAALLLVGGLALLLLALPRMPRDPWESCMDAEPEH.

Residues 1–10 lie on the Cytoplasmic side of the membrane; it reads MSQTKTLKVR. The helical transmembrane segment at 11–29 threads the bilayer; it reads VALLCILVGIVLALVAVVT. Residues 30–109 lie on the Extracellular side of the membrane; sequence DHWAVLSPHV…TQKEYSISAA (80 aa). N-linked (GlcNAc...) asparagine glycosylation is found at Asn43 and Asn80. An intrachain disulfide couples Cys57 to Cys81. Residues 110 to 130 form a helical membrane-spanning segment; it reads AIAIFSLGFIIVGTLCALLSF. Residues 131-135 lie on the Cytoplasmic side of the membrane; that stretch reads RKKRD. The chain crosses the membrane as a helical span at residues 136-156; it reads YLLRPASMFYIFAGLCLSVSA. Over 157–180 the chain is Extracellular; it reads EVMRQSVQRMVDSEHTAWIAHSLA. The helical transmembrane segment at 181-205 threads the bilayer; that stretch reads WSFICACVAAALLLVGGLALLLLAL. Residues 206–223 are Cytoplasmic-facing; sequence PRMPRDPWESCMDAEPEH.

Belongs to the PMP-22/EMP/MP20 family. CACNG subfamily. In terms of assembly, component of a calcium channel complex consisting of a pore-forming alpha subunit (CACNA1S) and the ancillary subunits CACNB1 or CACNB2, CACNG1 and CACNA2D1. The channel complex contains alpha, beta, gamma and delta subunits in a 1:1:1:1 ratio, i.e. it contains either CACNB1 or CACNB2. In terms of processing, N-glycosylated.

Its subcellular location is the cell membrane. The protein localises to the sarcolemma. Functionally, regulatory subunit of the voltage-gated calcium channel that gives rise to L-type calcium currents in skeletal muscle. Regulates channel inactivation kinetics. The protein is Voltage-dependent calcium channel gamma-1 subunit (CACNG1) of Bos taurus (Bovine).